Reading from the N-terminus, the 240-residue chain is Ribosome maturation protein SDO1 homolog (240 aa).

It belongs to the SDO1/SBDS family.

The polypeptide is Ribosome maturation protein SDO1 homolog (Methanocaldococcus jannaschii (strain ATCC 43067 / DSM 2661 / JAL-1 / JCM 10045 / NBRC 100440) (Methanococcus jannaschii)).